The sequence spans 226 residues: Putative N-acetylmannosamine-6-phosphate 2-epimerase 1 (226 aa).

The protein belongs to the NanE family.

It catalyses the reaction an N-acyl-D-glucosamine 6-phosphate = an N-acyl-D-mannosamine 6-phosphate. Its pathway is amino-sugar metabolism; N-acetylneuraminate degradation; D-fructose 6-phosphate from N-acetylneuraminate: step 3/5. In terms of biological role, converts N-acetylmannosamine-6-phosphate (ManNAc-6-P) to N-acetylglucosamine-6-phosphate (GlcNAc-6-P). The polypeptide is Putative N-acetylmannosamine-6-phosphate 2-epimerase 1 (Salmonella paratyphi A (strain ATCC 9150 / SARB42)).